The following is a 282-amino-acid chain: HTH-type transcriptional activator RhaR (282 aa).

The HTH araC/xylS-type domain occupies 179–277; that stretch reads DKLITRLAAS…GMTPSQWRHL (99 aa). 2 consecutive DNA-binding regions (H-T-H motif) follow at residues 196–217 and 244–267; these read DKFCDEASCSERVLRQQFRQQT and ISDISTECGFEDSNYFSVVFTRET.

As to quaternary structure, binds DNA as a dimer.

Its subcellular location is the cytoplasm. In terms of biological role, activates expression of the rhaSR operon in response to L-rhamnose. The sequence is that of HTH-type transcriptional activator RhaR from Shigella flexneri serotype 5b (strain 8401).